Reading from the N-terminus, the 157-residue chain is uncharacterized protein (157 aa).

This is an uncharacterized protein from Aquifex aeolicus (strain VF5).